Here is a 585-residue protein sequence, read N- to C-terminus: Dihydroxy-acid dehydratase, mitochondrial (585 aa).

The transit peptide at 1–20 directs the protein to the mitochondrion; sequence MGLLTKVATSRQFSTTRCVA. Position 70 (Cys-70) interacts with [2Fe-2S] cluster. Position 102 (Asp-102) interacts with Mg(2+). Cys-143 is a [2Fe-2S] cluster binding site. Asp-144 lines the Mg(2+) pocket. Cys-221 is a [2Fe-2S] cluster binding site. Mg(2+) is bound at residue Glu-474. The active-site Proton acceptor is Ser-500.

Belongs to the IlvD/Edd family. Requires [2Fe-2S] cluster as cofactor. It depends on Mg(2+) as a cofactor.

It is found in the mitochondrion. It catalyses the reaction (2R)-2,3-dihydroxy-3-methylbutanoate = 3-methyl-2-oxobutanoate + H2O. The catalysed reaction is (2R,3R)-2,3-dihydroxy-3-methylpentanoate = (S)-3-methyl-2-oxopentanoate + H2O. The protein operates within amino-acid biosynthesis; L-isoleucine biosynthesis; L-isoleucine from 2-oxobutanoate: step 3/4. Its pathway is amino-acid biosynthesis; L-valine biosynthesis; L-valine from pyruvate: step 3/4. With respect to regulation, catalytic activity is inactivated under iron-limiting conditions. Functionally, dihydroxyacid dehydratase that catalyzes the third step in the common pathway leading to biosynthesis of branched-chain amino acids. Catalyzes the dehydration of (2R,3R)-2,3-dihydroxy-3-methylpentanoate (2,3-dihydroxy-3-methylvalerate) into 2-oxo-3-methylpentanoate (2-oxo-3-methylvalerate) and of (2R)-2,3-dihydroxy-3-methylbutanoate (2,3-dihydroxyisovalerate) into 2-oxo-3-methylbutanoate (2-oxoisovalerate), the penultimate precursor to L-isoleucine and L-valine, respectively. Required for the synthesis of alpha-isopropylmalate which modulates the activity of LEU3 and subsequently regulates the expression of LEU1. The sequence is that of Dihydroxy-acid dehydratase, mitochondrial from Saccharomyces cerevisiae (strain ATCC 204508 / S288c) (Baker's yeast).